Consider the following 292-residue polypeptide: uncharacterized protein (292 aa).

The protein belongs to the glycosyltransferase 2 family. WaaE/KdtX subfamily.

This is an uncharacterized protein from Rickettsia prowazekii (strain Madrid E).